Here is a 153-residue protein sequence, read N- to C-terminus: 3-hydroxyacyl-[acyl-carrier-protein] dehydratase FabZ (153 aa).

Residue His54 is part of the active site.

This sequence belongs to the thioester dehydratase family. FabZ subfamily.

It localises to the cytoplasm. It carries out the reaction a (3R)-hydroxyacyl-[ACP] = a (2E)-enoyl-[ACP] + H2O. Its function is as follows. Involved in unsaturated fatty acids biosynthesis. Catalyzes the dehydration of short chain beta-hydroxyacyl-ACPs and long chain saturated and unsaturated beta-hydroxyacyl-ACPs. This is 3-hydroxyacyl-[acyl-carrier-protein] dehydratase FabZ from Chlamydia trachomatis serovar L2 (strain ATCC VR-902B / DSM 19102 / 434/Bu).